A 348-amino-acid polypeptide reads, in one-letter code: Dihydroorotase (348 aa).

Zn(2+) is bound by residues His17 and His19. Substrate is bound by residues His19–Arg21 and Asn45. Zn(2+) contacts are provided by Lys103, His140, and His178. Lys103 is subject to N6-carboxylysine. Substrate is bound at residue His140. Position 223 (Leu223) interacts with substrate. Asp251 provides a ligand contact to Zn(2+). Residue Asp251 is part of the active site. Residues His255 and Ala267 each coordinate substrate.

The protein belongs to the metallo-dependent hydrolases superfamily. DHOase family. Class II DHOase subfamily. As to quaternary structure, homodimer. Requires Zn(2+) as cofactor.

The catalysed reaction is (S)-dihydroorotate + H2O = N-carbamoyl-L-aspartate + H(+). It participates in pyrimidine metabolism; UMP biosynthesis via de novo pathway; (S)-dihydroorotate from bicarbonate: step 3/3. Catalyzes the reversible cyclization of carbamoyl aspartate to dihydroorotate. This Yersinia pestis protein is Dihydroorotase.